A 348-amino-acid polypeptide reads, in one-letter code: UPF0324 membrane protein BH02290 (348 aa).

The next 11 membrane-spanning stretches (helical) occupy residues 13 to 35 (AFLN…AYGL), 45 to 67 (QAWL…CFTL), 74 to 96 (GITF…SISV), 106 to 128 (LLAS…GRLF), 135 to 157 (AMLV…APVI), 167 to 189 (SIAF…HPFL), 196 to 218 (YGVL…ASVS), 223 to 245 (QIAT…ALSI), 257 to 275 (LHTL…MLIR), 285 to 307 (LIPI…GLGV), and 319 to 341 (VILA…IQLN).

The protein belongs to the UPF0324 family.

It is found in the cell membrane. This chain is UPF0324 membrane protein BH02290, found in Bartonella henselae (strain ATCC 49882 / DSM 28221 / CCUG 30454 / Houston 1) (Rochalimaea henselae).